The chain runs to 478 residues: Proline--tRNA ligase (478 aa).

Belongs to the class-II aminoacyl-tRNA synthetase family. ProS type 3 subfamily. Homodimer.

Its subcellular location is the cytoplasm. The catalysed reaction is tRNA(Pro) + L-proline + ATP = L-prolyl-tRNA(Pro) + AMP + diphosphate. Its function is as follows. Catalyzes the attachment of proline to tRNA(Pro) in a two-step reaction: proline is first activated by ATP to form Pro-AMP and then transferred to the acceptor end of tRNA(Pro). This is Proline--tRNA ligase from Ruminiclostridium cellulolyticum (strain ATCC 35319 / DSM 5812 / JCM 6584 / H10) (Clostridium cellulolyticum).